The sequence spans 126 residues: Fluoride-specific ion channel FluC (126 aa).

4 helical membrane passes run 6 to 26 (FVAV…FAVL), 36 to 56 (YGTL…VGFF), 68 to 88 (LLAV…SSEV), and 99 to 119 (IGML…MLGL). 2 residues coordinate Na(+): Gly-76 and Thr-79.

This sequence belongs to the fluoride channel Fluc/FEX (TC 1.A.43) family.

The protein localises to the cell inner membrane. It carries out the reaction fluoride(in) = fluoride(out). Its activity is regulated as follows. Na(+) is not transported, but it plays an essential structural role and its presence is essential for fluoride channel function. Fluoride-specific ion channel. Important for reducing fluoride concentration in the cell, thus reducing its toxicity. This chain is Fluoride-specific ion channel FluC, found in Ralstonia nicotianae (strain ATCC BAA-1114 / GMI1000) (Ralstonia solanacearum).